A 214-amino-acid polypeptide reads, in one-letter code: Phosphopantothenoylcysteine decarboxylase HAL3 (214 aa).

FMN contacts are provided by residues 30–32 and 55–57; these read GSV and TRA. Catalysis depends on histidine 92, which acts as the Proton donor. Residues 108–111 and alanine 142 contribute to the FMN site; that span reads SANT. Asparagine 144, arginine 174, and alanine 176 together coordinate N-[(R)-4-phosphopantothenoyl]-L-cysteine. The active-site Proton donor is the cysteine 177. Methionine 185 serves as a coordination point for N-[(R)-4-phosphopantothenoyl]-L-cysteine.

The protein belongs to the HFCD (homooligomeric flavin containing Cys decarboxylase) superfamily. In terms of assembly, homotrimer. It depends on FMN as a cofactor. As to expression, mainly expressed in stems, to a lower extent in flowers, leaves and fruits, and at basal levels in roots.

It localises to the cell membrane. The protein localises to the cytoplasm. The catalysed reaction is N-[(R)-4-phosphopantothenoyl]-L-cysteine + H(+) = (R)-4'-phosphopantetheine + CO2. It participates in cofactor biosynthesis; coenzyme A biosynthesis; CoA from (R)-pantothenate: step 3/5. Functionally, involved in plant growth, and promotes salt and osmotic tolerance, probably via coenzyme A (CoA) accumulation and endogenous proline accumulation. Catalyzes the decarboxylation of 4'-phosphopantothenoylcysteine to 4'-phosphopantetheine, a key step in coenzyme A biosynthesis. Required for roots development. The protein is Phosphopantothenoylcysteine decarboxylase HAL3 of Malus domestica (Apple).